The following is a 217-amino-acid chain: Octanoyltransferase (217 aa).

In terms of domain architecture, BPL/LPL catalytic spans 32–207 (NDSPDELWIV…TLSQLLGYQH (176 aa)). Substrate-binding positions include 71 to 78 (RGGQVTYH), 138 to 140 (SLG), and 151 to 153 (GLA). Cysteine 169 acts as the Acyl-thioester intermediate in catalysis.

This sequence belongs to the LipB family.

Its subcellular location is the cytoplasm. It carries out the reaction octanoyl-[ACP] + L-lysyl-[protein] = N(6)-octanoyl-L-lysyl-[protein] + holo-[ACP] + H(+). It participates in protein modification; protein lipoylation via endogenous pathway; protein N(6)-(lipoyl)lysine from octanoyl-[acyl-carrier-protein]: step 1/2. Catalyzes the transfer of endogenously produced octanoic acid from octanoyl-acyl-carrier-protein onto the lipoyl domains of lipoate-dependent enzymes. Lipoyl-ACP can also act as a substrate although octanoyl-ACP is likely to be the physiological substrate. This Shewanella oneidensis (strain ATCC 700550 / JCM 31522 / CIP 106686 / LMG 19005 / NCIMB 14063 / MR-1) protein is Octanoyltransferase.